The following is a 368-amino-acid chain: MGKGFGLLRKPCQSVVAEPQQYSALEEERTMKRKRVLSRDLCSAWDSPHGLVGLHNIGQTCCLNSLLQVFMMNMDFRMILKRITVPRSAEERKRSVPFQLLLLLEKMQDSRQKAVLPTELVQCLQKYNVPLFVQHDAAQLYLTIWNLTKDQITDTDLTERLQGLFTIWTQESLICVGCTAESSRRSKLLTLSLPLFDKDAKPLKTLEDALRCFVQPKELASSDMCCESCGEKTPWKQVLKLTHLPQTLTIHLMRFSARNSRTEKICHSVNFPQSLDFSQVLPTEEDLGDTKEQSEIHYELFAVIAHVGMADFGHYCAYIRNPVDGKWFCFNDSHVCWVTWKDVQCTYGNHRYRWRETAYLLVYTKTGS.

A mediates interaction with IFNAR2 region spans residues 31–48 (MKRKRVLSRDLCSAWDSP). Positions 48 to 109 (PHGLVGLHNI…LLLLLEKMQD (62 aa)) are mediates interaction with STAT2. Residues 52–366 (VGLHNIGQTC…TAYLLVYTKT (315 aa)) form the USP domain. Catalysis depends on cysteine 61, which acts as the Nucleophile. The interval 299-308 (ELFAVIAHVG) is mediates interaction with STAT2 and necessary for the negative regulation of the type I IFN signaling pathway. The interval 309–368 (MADFGHYCAYIRNPVDGKWFCFNDSHVCWVTWKDVQCTYGNHRYRWRETAYLLVYTKTGS) is mediates interaction with IFNAR2. Histidine 314 serves as the catalytic Proton acceptor.

It belongs to the peptidase C19 family. In terms of assembly, interacts with STAT2; the interaction is direct. Interacts with IFNAR2; indirectly via STAT2, it negatively regulates the assembly of the ternary interferon-IFNAR1-IFNAR2 complex and inhibits type I interferon signaling. Interacts with STING1. Interacts with USP20.

The catalysed reaction is Thiol-dependent hydrolysis of ester, thioester, amide, peptide and isopeptide bonds formed by the C-terminal Gly of ubiquitin (a 76-residue protein attached to proteins as an intracellular targeting signal).. Its function is as follows. Interferon-induced ISG15-specific protease that plays a crucial role for maintaining a proper balance of ISG15-conjugated proteins in cells. Regulates protein ISGylation by efficiently cleaving ISG15 conjugates linked via isopeptide bonds. Regulates T-cell activation and T-helper 17 (Th17) cell differentiation by deubiquitinating TAK1, likely to keep TAK1-TAB complexes in steady conditions. In turn, restricts activation of NF-kappa-B, NFAT, and JNK as well as expression of IL2 in T-cells after TCR activation. Acts as a molecular adapter with USP20 to promote innate antiviral response through deubiquitinating STING1. Involved also in the negative regulation of the inflammatory response triggered by type I interferon. Upon recruitment by STAT2 to the type I interferon receptor subunit IFNAR2 interferes with the assembly of the ternary interferon-IFNAR1-IFNAR2 complex and acts as a negative regulator of the type I interferon signaling pathway. This is Ubl carboxyl-terminal hydrolase 18 (Usp18) from Mus musculus (Mouse).